The following is a 131-amino-acid chain: Squamosa promoter-binding-like protein 3 (131 aa).

The segment covering 1 to 17 (MSMRRSKAEGKRSLREL) has biased composition (basic and acidic residues). Residues 1 to 54 (MSMRRSKAEGKRSLRELSEEEEEEEETEDEDTFEEEEALEKKQKGKATSSSGVC) are disordered. The segment covering 18–38 (SEEEEEEEETEDEDTFEEEEA) has biased composition (acidic residues). Residues 45–129 (GKATSSSGVC…GHNERRRKST (85 aa)) form a sufficient and necessary for DNA binding region. An SBP-type zinc finger spans residues 51 to 128 (SGVCQVESCT…AGHNERRRKS (78 aa)). Zn(2+)-binding residues include Cys-54, Cys-59, Cys-76, His-79, Cys-95, Cys-98, His-102, and Cys-114. The Bipartite nuclear localization signal motif lies at 111-127 (KRSCRRRLAGHNERRRK).

The cofactor is Zn(2+). As to expression, expressed in vegetative and inflorescence apical meristems, floral meristems, leaf and flower organ primordia, inflorescence stem tissue and to lower extent in roots.

The protein localises to the nucleus. The protein resides in the cytoplasm. Trans-acting factor that binds specifically to the consensus nucleotide sequence 5'-TNCGTACAA-3' of AP1 promoter. Binds specifically to the 5'-GTAC-3' core sequence. Promotes both vegetative phase change and flowering. Regulates phase-specific patterns of leaf epidermal differentiation and flowering time, but does not seem to affect leaf shape. This Arabidopsis thaliana (Mouse-ear cress) protein is Squamosa promoter-binding-like protein 3 (SPL3).